The chain runs to 362 residues: Aminomethyltransferase (362 aa).

This sequence belongs to the GcvT family. As to quaternary structure, the glycine cleavage system is composed of four proteins: P, T, L and H.

The enzyme catalyses N(6)-[(R)-S(8)-aminomethyldihydrolipoyl]-L-lysyl-[protein] + (6S)-5,6,7,8-tetrahydrofolate = N(6)-[(R)-dihydrolipoyl]-L-lysyl-[protein] + (6R)-5,10-methylene-5,6,7,8-tetrahydrofolate + NH4(+). Functionally, the glycine cleavage system catalyzes the degradation of glycine. The polypeptide is Aminomethyltransferase (Listeria welshimeri serovar 6b (strain ATCC 35897 / DSM 20650 / CCUG 15529 / CIP 8149 / NCTC 11857 / SLCC 5334 / V8)).